The following is a 337-amino-acid chain: D-alanine--D-alanine ligase (337 aa).

Residues 124–330 (KMWFSALGIP…FTEYLSLVIN (207 aa)) enclose the ATP-grasp domain. ATP is bound at residue 154–209 (ALAQWGSIFVKAASQGSSVGCYKVDDSAKVAGVLKDAFGYAPYVIVEKTIKARELE). Residues Asp284, Glu297, and Asn299 each coordinate Mg(2+).

The protein belongs to the D-alanine--D-alanine ligase family. Mg(2+) is required as a cofactor. Requires Mn(2+) as cofactor.

The protein resides in the cytoplasm. The enzyme catalyses 2 D-alanine + ATP = D-alanyl-D-alanine + ADP + phosphate + H(+). It functions in the pathway cell wall biogenesis; peptidoglycan biosynthesis. Its function is as follows. Cell wall formation. In Shewanella baltica (strain OS223), this protein is D-alanine--D-alanine ligase.